A 338-amino-acid polypeptide reads, in one-letter code: Protein RecA (338 aa).

68–75 (GPESSGKT) contributes to the ATP binding site.

It belongs to the RecA family.

The protein resides in the cytoplasm. In terms of biological role, can catalyze the hydrolysis of ATP in the presence of single-stranded DNA, the ATP-dependent uptake of single-stranded DNA by duplex DNA, and the ATP-dependent hybridization of homologous single-stranded DNAs. It interacts with LexA causing its activation and leading to its autocatalytic cleavage. The chain is Protein RecA from Citrifermentans bemidjiense (strain ATCC BAA-1014 / DSM 16622 / JCM 12645 / Bem) (Geobacter bemidjiensis).